The sequence spans 383 residues: E3 ubiquitin-protein ligase Os04g0590900 (383 aa).

Residues 53–73 (PVFSPLVIAIIGVLASAFLLV) form a helical membrane-spanning segment. A disordered region spans residues 105–129 (GGAGSGGRHGHGQSRSHESWNVSPP). Residues 157-199 (CSVCLGEFSDGESLRLLPRCSHAFHQQCIDTWLKSHSNCPLCR) form an RING-type; atypical zinc finger. 2 disordered regions span residues 269 to 291 (EANGAAEIREEGSPPKRGASSFD) and 320 to 383 (LLAG…DHPM).

It is found in the membrane. The catalysed reaction is S-ubiquitinyl-[E2 ubiquitin-conjugating enzyme]-L-cysteine + [acceptor protein]-L-lysine = [E2 ubiquitin-conjugating enzyme]-L-cysteine + N(6)-ubiquitinyl-[acceptor protein]-L-lysine.. It participates in protein modification; protein ubiquitination. Its function is as follows. Possesses E3 ubiquitin-protein ligase in vitro. This is E3 ubiquitin-protein ligase Os04g0590900 from Oryza sativa subsp. japonica (Rice).